Reading from the N-terminus, the 310-residue chain is Ribosomal RNA small subunit methyltransferase H (310 aa).

S-adenosyl-L-methionine-binding positions include 35–37 (GGH), Asp-52, Phe-79, Asp-100, and Gln-107.

It belongs to the methyltransferase superfamily. RsmH family.

Its subcellular location is the cytoplasm. It carries out the reaction cytidine(1402) in 16S rRNA + S-adenosyl-L-methionine = N(4)-methylcytidine(1402) in 16S rRNA + S-adenosyl-L-homocysteine + H(+). Its function is as follows. Specifically methylates the N4 position of cytidine in position 1402 (C1402) of 16S rRNA. The sequence is that of Ribosomal RNA small subunit methyltransferase H from Anaeromyxobacter dehalogenans (strain 2CP-1 / ATCC BAA-258).